Consider the following 71-residue polypeptide: Stathmin-1-B (71 aa).

The stretch at 1–67 forms a coiled coil; it reads KREHEKEVLQ…EIRKGKECKE (67 aa). Residues 1–71 form the SLD domain; sequence KREHEKEVLQ…GKECKEPSED (71 aa).

The protein belongs to the stathmin family. In terms of assembly, binds to two alpha/beta-tubulin heterodimers. Post-translationally, from unphosphorylated forms to highly phosphorylated ones in the mature egg, followed by progressive dephosphorylation from the mid-blastula to the tailbud stage. In terms of tissue distribution, ubiquitous. Mostly abundant in brain and oocytes.

The protein localises to the cytoplasm. It localises to the cytoskeleton. Involved in the regulation of the microtubule (MT) filament system by destabilizing microtubules. It prevents assembly and promotes disassembly of microtubules. The polypeptide is Stathmin-1-B (stmn1-b) (Xenopus laevis (African clawed frog)).